The sequence spans 5430 residues: Microtubule-actin cross-linking factor 1 (5430 aa).

The interval 1–47 (MSSSDEETLSERSCRSERSCRSERSYRSERSGSLSPCPPGDTLPWNL) is disordered. Residues 1-295 (MSSSDEETLS…VITYVSSIYD (295 aa)) are actin-binding. S4 carries the phosphoserine modification. Residues 9-30 (LSERSCRSERSCRSERSYRSER) are compositionally biased toward basic and acidic residues. Residues S35 and S57 each carry the phosphoserine modification. 2 Calponin-homology (CH) domains span residues 78–181 (RVQK…LHFQ) and 194–298 (MSAK…DAFP). LRR repeat units lie at residues 148–171 (QRQVKLVNIRNDDITDGNPKLTLG) and 240–264 (LVDMERVQIQSNRENLEQAFEVAER). S280 is modified (phosphoserine). 2 LRR repeats span residues 377–399 (LYKLLEVWIEFGRIKLPQGYHPN) and 441–464 (LNCEEKLTLAKNTLQADAAHLESG). An SH3 domain is found at 868–925 (KSTLSVKAICDYRQIEITICKNDECVLEDNSQRTKWKVISPTGNEAMVPSVCLLIPPP). The stretch at 1050 to 1073 (ISELKNIRLRLEECEQRLLKQIQS) is one LRR 5 repeat. S1122 carries the post-translational modification Phosphoserine. 3 LRR repeats span residues 1128–1154 (ATTLRSELNLMVEKMDHVYGLSIVCLN), 1187–1210 (PADLSALESHRTTLQHWLSDVKDK), and 1257–1282 (HRVIAQLETRQSEVESIQEVLRDYRA). Residues S1367 and S1376 each carry the phosphoserine modification. LRR repeat units lie at residues 1579–1602 (QQELSALQQNQSDLKDLQGDIQNH) and 1629–1653 (LTALREKLYQAKEQYEGLQDRTREA). Spectrin repeat units follow at residues 1816–1891 (ELQK…NFEE) and 1933–2041 (QYQQ…ALLQ). Phosphoserine is present on S1860. One copy of the LRR 11 repeat lies at 1869-1891 (KGDLRFVTISGQKVLETENNFEE). LRR repeat units follow at residues 2058–2083 (LQSMKEVEQNLEGEQVAALSSGLIQE) and 2194–2220 (IQELTLEMEDQKENLGTLEHLVTALGS). Residues 2399–2507 (RMEEVQKEAS…TVARQKQLEE (109 aa)) form a Spectrin 3 repeat. S2429 and S2454 each carry phosphoserine. 3 LRR repeats span residues 2444–2467 (KAFLAELEQNSPKIQKVKEALAGL), 2534–2557 (GVLGPLSIDPNMLNAQKQQVQFML), and 2702–2725 (KKRLETVALPLQGLEDLAADRMNR). 2 Spectrin repeats span residues 2733–2837 (TQQF…SRLK) and 2842–2945 (KAQK…SLEE). 2 positions are modified to phosphoserine: S2769 and S2895. 3 LRR repeats span residues 2984–3009 (NKNLEKLKAQREVLQALDPQVDYLRD), 3105–3127 (NKIQALRLDIEDSEAECRKMLEE), and 3214–3237 (KEQVDPLQVKLQQVNGLGQGLIQS). 13 Spectrin repeats span residues 3169–3274 (EDFY…QLQE), 3281–3383 (KFQD…QLED), 3388–3491 (AKQF…SLLE), 3714–3818 (RSQQ…ARLE), 3825–3927 (NQFW…ALDE), 4047–4152 (LAEK…KLED), 4157–4261 (AVQY…HKLE), 4267–4370 (LGQF…QQLQ), 4375–4481 (QAQG…KLEE), 4486–4589 (ATEF…RSLD), 4594–4700 (RAKQ…KLEE), 4707–4808 (QFMD…RLEQ), and 4812–4916 (QAEE…QRLE). T3368 carries the post-translational modification Phosphothreonine. LRR repeat units lie at residues 3737-3761 (MALGPIRLEQDQTTAQLQVQKAFSI) and 3846-3870 (AQLPPPAVDHEQLRQQQEEMRQLRE). A Phosphoserine modification is found at S4074. K4252 carries the N6-acetyllysine modification. An LRR 22 repeat occupies 4538 to 4561 (RDQIIELDQTGNQLKFLSQKQDVV). Positions 4993–5023 (PTHAPFIEKSRSGSRKSLNQPTPPPMPILSQ) are disordered. S5009 is modified (phosphoserine). 2 EF-hand domains span residues 5083–5118 (HKKSRVMDFFRRIDKDQDGKITRQEFIDGILASKFP) and 5119–5154 (TTKLEMTAVADIFDRDGDGYIDYYEFVAALHPNKDA). 10 residues coordinate Ca(2+): D5096, D5098, D5100, K5102, E5107, D5132, D5134, D5136, Y5138, and E5143. One can recognise a GAR domain in the interval 5159–5231 (TDADKIEDEV…EFLVKNDPCR (73 aa)). The tract at residues 5159–5430 (TDADKIEDEV…ASPRTPCPKR (272 aa)) is C-terminal tail. Residues 5247–5430 (PEGASQGMTP…ASPRTPCPKR (184 aa)) form a disordered region. Residues 5267 to 5301 (SSRAASPTRSSSSASQSNHSCTSMPSSPATPASGT) are compositionally biased toward low complexity. Position 5296 is a phosphothreonine (T5296). A compositionally biased stretch (polar residues) spans 5317–5341 (TFHSSRTSLAGDTSNSSSPASTGAK). Phosphoserine is present on residues S5321 and S5334. Residues 5352–5366 (SRPGSRAGSRAGSRA) show a composition bias toward low complexity. Residues 5355 to 5370 (GSRAGSRAGSRASSRR) are 4 X 4 AA tandem repeats of [GS]-S-R-[AR]. 2 positions are modified to phosphoserine: S5372 and S5375. Over residues 5381-5391 (ETQSACSDTSE) the composition is skewed to polar residues. Low complexity predominate over residues 5392 to 5403 (SSAAGGQGSSRR).

Belongs to the plakin or cytolinker family. Interacts with MAPRE1, CLASP1, CLASP2 and GOLGA4. Interacts with AXIN1 and LRP6. Found in a complex composed of MACF1, APC; AXIN1, CTNNB1 and GSK3B. Interacts with CAMSAP3. Post-translationally, phosphorylated on serine residues in the C-terminal tail by GSK3B. Phosphorylation inhibits microtubule-binding and this plays a critical role in bulge stem cell migration and skin wound repair. Wnt-signaling can repress phosphorylation.

Its subcellular location is the cytoplasm. The protein resides in the cytoskeleton. It localises to the golgi apparatus. It is found in the cell membrane. The protein localises to the cell projection. Its subcellular location is the ruffle membrane. The protein resides in the membrane. Its function is as follows. F-actin-binding protein which plays a role in cross-linking actin to other cytoskeletal proteins and also binds to microtubules. Plays an important role in ERBB2-dependent stabilization of microtubules at the cell cortex. Acts as a positive regulator of Wnt receptor signaling pathway and is involved in the translocation of AXIN1 and its associated complex (composed of APC, CTNNB1 and GSK3B) from the cytoplasm to the cell membrane. Has actin-regulated ATPase activity and is essential for controlling focal adhesions (FAs) assembly and dynamics. Interaction with CAMSAP3 at the minus ends of non-centrosomal microtubules tethers microtubules minus-ends to actin filaments, regulating focal adhesion size and cell migration. May play role in delivery of transport vesicles containing GPI-linked proteins from the trans-Golgi network through its interaction with GOLGA4. Plays a key role in wound healing and epidermal cell migration. Required for efficient upward migration of bulge cells in response to wounding and this function is primarily rooted in its ability to coordinate microtubule dynamics and polarize hair follicle stem cells. As a regulator of actin and microtubule arrangement and stabilization, it plays an essential role in neurite outgrowth, branching and spine formation during brain development. The protein is Microtubule-actin cross-linking factor 1 of Rattus norvegicus (Rat).